The chain runs to 327 residues: (-)-delta-cadinene synthase (327 aa).

5 residues coordinate Mg(2+): aspartate 84, aspartate 85, asparagine 222, threonine 226, and glutamate 230.

It belongs to the terpene synthase family.

The enzyme catalyses (2E,6E)-farnesyl diphosphate = (-)-delta-cadinene + diphosphate. Catalyzes the conversion of (2E,6E)-farnesyl diphosphate into (-)-delta-cadinene. Cyclization mechanism involves an intermediate nerolidyl diphosphate leading to a helminthogermacradienyl cation. The chain is (-)-delta-cadinene synthase from Streptomyces clavuligerus.